The following is a 361-amino-acid chain: Chorismate synthase (361 aa).

The NADP(+) site is built by arginine 48 and arginine 54. FMN-binding positions include 125-127 (RSS), 238-239 (NA), glycine 278, 293-297 (KPTSS), and arginine 319.

The protein belongs to the chorismate synthase family. In terms of assembly, homotetramer. FMNH2 is required as a cofactor.

It carries out the reaction 5-O-(1-carboxyvinyl)-3-phosphoshikimate = chorismate + phosphate. It functions in the pathway metabolic intermediate biosynthesis; chorismate biosynthesis; chorismate from D-erythrose 4-phosphate and phosphoenolpyruvate: step 7/7. Its function is as follows. Catalyzes the anti-1,4-elimination of the C-3 phosphate and the C-6 proR hydrogen from 5-enolpyruvylshikimate-3-phosphate (EPSP) to yield chorismate, which is the branch point compound that serves as the starting substrate for the three terminal pathways of aromatic amino acid biosynthesis. This reaction introduces a second double bond into the aromatic ring system. The chain is Chorismate synthase from Shigella flexneri serotype 5b (strain 8401).